The primary structure comprises 350 residues: WUSCHEL-related homeobox 1 (350 aa).

The homeobox; WUS-type DNA-binding region spans 72 to 136 (MVSSRWNPTP…NHKARERQKR (65 aa)). The interval 283–308 (TNTETCHRNGDDNKDQEQHEDCSNGE) is disordered.

It belongs to the WUS homeobox family.

Its subcellular location is the nucleus. Functionally, transcription factor which may be involved in developmental processes. This is WUSCHEL-related homeobox 1 (WOX1) from Arabidopsis thaliana (Mouse-ear cress).